The sequence spans 212 residues: Cell division protein YtfB (212 aa).

A helical membrane pass occupies residues 34-50; it reads GIIIAAIVLVVGFLLPS. Positions 88–127 are disordered; that stretch reads NDPDQVAPVAPEPIQEGQPEEQPQTTQTQPFQPDSGIDNQ. The span at 99-120 shows a compositional bias: low complexity; the sequence is EPIQEGQPEEQPQTTQTQPFQP. An oapA region spans residues 117 to 212; that stretch reads PFQPDSGIDN…QPDGSFIRAR (96 aa).

This sequence belongs to the OapA family.

Its subcellular location is the cell inner membrane. Functionally, cell division protein whose function is related to the generation of a transient cell wall structure. Function is linked to the late stages of cell division. This chain is Cell division protein YtfB (ytfB), found in Escherichia coli (strain K12).